Reading from the N-terminus, the 340-residue chain is UDP-N-acetylglucosamine--N-acetylmuramyl-(pentapeptide) pyrophosphoryl-undecaprenol N-acetylglucosamine transferase (340 aa).

UDP-N-acetyl-alpha-D-glucosamine contacts are provided by residues 10–12 (TGG), N124, S179, and Q277.

The protein belongs to the glycosyltransferase 28 family. MurG subfamily.

Its subcellular location is the cell inner membrane. The catalysed reaction is di-trans,octa-cis-undecaprenyl diphospho-N-acetyl-alpha-D-muramoyl-L-alanyl-D-glutamyl-meso-2,6-diaminopimeloyl-D-alanyl-D-alanine + UDP-N-acetyl-alpha-D-glucosamine = di-trans,octa-cis-undecaprenyl diphospho-[N-acetyl-alpha-D-glucosaminyl-(1-&gt;4)]-N-acetyl-alpha-D-muramoyl-L-alanyl-D-glutamyl-meso-2,6-diaminopimeloyl-D-alanyl-D-alanine + UDP + H(+). The protein operates within cell wall biogenesis; peptidoglycan biosynthesis. Cell wall formation. Catalyzes the transfer of a GlcNAc subunit on undecaprenyl-pyrophosphoryl-MurNAc-pentapeptide (lipid intermediate I) to form undecaprenyl-pyrophosphoryl-MurNAc-(pentapeptide)GlcNAc (lipid intermediate II). The protein is UDP-N-acetylglucosamine--N-acetylmuramyl-(pentapeptide) pyrophosphoryl-undecaprenol N-acetylglucosamine transferase of Sulfurimonas denitrificans (strain ATCC 33889 / DSM 1251) (Thiomicrospira denitrificans (strain ATCC 33889 / DSM 1251)).